A 253-amino-acid polypeptide reads, in one-letter code: MRLKGVLALFSFFTAIPIKSNASLEEIAEYSYISPLIIGISLALIESAVYVLLYRILEALAGIVLLGVVELLRGFNHLDGLLDLGDALMIKGDRERKIKALKDVEIGSGGIGLLLVYLSIQIVALLKLGFSFYTIFHLISSNVLSMTIGLYILSTISPIPESNLGKIFHNKLKGKSTVLLLELIPFISLYNIIVFLVFYMIMHKICRSLGGSSGDIAGASITLSFPLFLLTNEITNLNYSLLSILCYLFLHLH.

Helical transmembrane passes span 33 to 53 (ISPLIIGISLALIESAVYVLL), 106 to 126 (IGSGGIGLLLVYLSIQIVALL), 132 to 152 (FYTIFHLISSNVLSMTIGLYI), and 178 to 198 (VLLLELIPFISLYNIIVFLVF).

It belongs to the CobS family. Mg(2+) is required as a cofactor.

It localises to the cell membrane. The catalysed reaction is alpha-ribazole + adenosylcob(III)inamide-GDP = adenosylcob(III)alamin + GMP + H(+). It carries out the reaction alpha-ribazole 5'-phosphate + adenosylcob(III)inamide-GDP = adenosylcob(III)alamin 5'-phosphate + GMP + H(+). Its pathway is cofactor biosynthesis; adenosylcobalamin biosynthesis; adenosylcobalamin from cob(II)yrinate a,c-diamide: step 7/7. In terms of biological role, joins adenosylcobinamide-GDP and alpha-ribazole to generate adenosylcobalamin (Ado-cobalamin). Also synthesizes adenosylcobalamin 5'-phosphate from adenosylcobinamide-GDP and alpha-ribazole 5'-phosphate. In Saccharolobus islandicus (strain Y.G.57.14 / Yellowstone #1) (Sulfolobus islandicus), this protein is Adenosylcobinamide-GDP ribazoletransferase.